Consider the following 299-residue polypeptide: Bifunctional protein FolD (299 aa).

Residues 166–168 (GRS), S191, and I232 each bind NADP(+).

It belongs to the tetrahydrofolate dehydrogenase/cyclohydrolase family. As to quaternary structure, homodimer.

The catalysed reaction is (6R)-5,10-methylene-5,6,7,8-tetrahydrofolate + NADP(+) = (6R)-5,10-methenyltetrahydrofolate + NADPH. It carries out the reaction (6R)-5,10-methenyltetrahydrofolate + H2O = (6R)-10-formyltetrahydrofolate + H(+). It participates in one-carbon metabolism; tetrahydrofolate interconversion. Functionally, catalyzes the oxidation of 5,10-methylenetetrahydrofolate to 5,10-methenyltetrahydrofolate and then the hydrolysis of 5,10-methenyltetrahydrofolate to 10-formyltetrahydrofolate. This Dinoroseobacter shibae (strain DSM 16493 / NCIMB 14021 / DFL 12) protein is Bifunctional protein FolD.